Reading from the N-terminus, the 62-residue chain is MAVPARKTSKTKKRMRRGHIKLATLNLAPCPNCGELRKSHVVCPSCGFYDGRQVVAVKNANN.

Belongs to the bacterial ribosomal protein bL32 family.

The chain is Large ribosomal subunit protein bL32 from Levilactobacillus brevis (strain ATCC 367 / BCRC 12310 / CIP 105137 / JCM 1170 / LMG 11437 / NCIMB 947 / NCTC 947) (Lactobacillus brevis).